Here is a 106-residue protein sequence, read N- to C-terminus: MNDSEFHRLADQLWLTIEERLDDRDGDSDIDCEINGGVLTITFENGSKIIINRQEPLHQVWLATKQGGSHFDLKGDEWICDRSGETFWDLLEQAATQQAGETVSFR.

The protein belongs to the frataxin family.

Involved in iron-sulfur (Fe-S) cluster assembly. May act as a regulator of Fe-S biogenesis. The polypeptide is Iron-sulfur cluster assembly protein CyaY (Shigella flexneri serotype 5b (strain 8401)).